Reading from the N-terminus, the 449-residue chain is Biotin carboxylase (449 aa).

Positions 1-445 (MLDKIVIANR…NIHYLEKKLG (445 aa)) constitute a Biotin carboxylation domain. Residues K116, K159, 165 to 166 (GG), 201 to 204 (EKYL), H209, and H236 contribute to the ATP site. An ATP-grasp domain is found at 120-317 (IAAMKKAGVP…LIKEQLRIAA (198 aa)). K238 contributes to the hydrogencarbonate binding site. Positions 276 and 288 each coordinate ATP. Residues E276, E288, and N290 each coordinate Mg(2+). Residues E276, E288, and N290 each contribute to the Mn(2+) site. R292, V295, and R338 together coordinate hydrogencarbonate. R292 is an active-site residue. R338 lines the biotin pocket.

Acetyl-CoA carboxylase is a heterohexamer of biotin carboxyl carrier protein, biotin carboxylase and the two subunits of carboxyl transferase in a 2:2 complex. Mg(2+) serves as cofactor. Requires Mn(2+) as cofactor.

The enzyme catalyses N(6)-biotinyl-L-lysyl-[protein] + hydrogencarbonate + ATP = N(6)-carboxybiotinyl-L-lysyl-[protein] + ADP + phosphate + H(+). It participates in lipid metabolism; malonyl-CoA biosynthesis; malonyl-CoA from acetyl-CoA: step 1/1. Its function is as follows. This protein is a component of the acetyl coenzyme A carboxylase complex; first, biotin carboxylase catalyzes the carboxylation of the carrier protein and then the transcarboxylase transfers the carboxyl group to form malonyl-CoA. The protein is Biotin carboxylase (accC) of Escherichia coli O157:H7.